The sequence spans 153 residues: ORM1-like protein 2 (153 aa).

Residues 1-21 (MNVGVAHSEVNPNTRVMNSRG) are Cytoplasmic-facing. 2 helical membrane passes run 22 to 42 (IWLAYIILVGLLHVVLLSIPF) and 43 to 63 (FSIPVVWTLTNVIHNLVMYVF). The Cytoplasmic portion of the chain corresponds to 64-105 (LHTVKGTPFETPDQGKARLLTHWEQMDYGLQFTSSRKFLSIS). Residues 106-126 (PIVLYLLASFYTKYDAAHFLI) form a helical membrane-spanning segment. Residues 127–153 (NTASLLSVLLPKLPQFHGVRLFGINKY) lie on the Extracellular side of the membrane.

The protein belongs to the ORM family. Ceramide-sensitive subunit of the serine palmitoyltransferase (SPT) complex, which is also composed of SPTLC1, SPTLC2/3 and SPTSSA/B.

It is found in the endoplasmic reticulum membrane. In terms of biological role, plays an essential role in the homeostatic regulation of sphingolipid de novo biosynthesis by modulating the activity of the serine palmitoyltransferase (SPT) in response to ceramide levels. When complexed to SPT, the binding of ceramides to its N-terminus stabilizes a conformation that block SPT substrate entry, hence preventing SPT catalytic activity. Through this mechanism, maintains ceramide levels at sufficient concentrations for the production of complex sphingolipids, but which prevents the accumulation of ceramides to levels that trigger apoptosis. This chain is ORM1-like protein 2 (ORMDL2), found in Bos taurus (Bovine).